A 135-amino-acid chain; its full sequence is C-type lectin Cal (135 aa).

Cystine bridges form between Cys3/Cys14, Cys31/Cys131, Cys38/Cys133, and Cys106/Cys123. The C-type lectin domain maps to 10 to 132; sequence MNGLCYKIFN…CESKDAFLCQ (123 aa). The Ca(2+) site is built by Gln96, Asp98, Glu104, Asn119, and Asp120. The short motif at 96-98 is the Galactose-binding element; the sequence is QPD.

Belongs to the true venom lectin family. Homodecamer of disulfide-linked dimers arranged in two pseudo-5-fold symmetric pentamers. Expressed by the venom gland.

The protein localises to the secreted. In terms of biological role, galactose-binding protein which recognizes specific carbohydrate structures and agglutinates a variety of animal cells by binding to cell-surface glycoproteins and glycolipids. Calcium-dependent lectin. Shows high hemagglutinating activity (MHC=10 ng/ml). This chain is C-type lectin Cal, found in Crotalus atrox (Western diamondback rattlesnake).